The primary structure comprises 114 residues: Large ribosomal subunit protein uL22 (114 aa).

The protein belongs to the universal ribosomal protein uL22 family. Part of the 50S ribosomal subunit.

In terms of biological role, this protein binds specifically to 23S rRNA; its binding is stimulated by other ribosomal proteins, e.g. L4, L17, and L20. It is important during the early stages of 50S assembly. It makes multiple contacts with different domains of the 23S rRNA in the assembled 50S subunit and ribosome. Its function is as follows. The globular domain of the protein is located near the polypeptide exit tunnel on the outside of the subunit, while an extended beta-hairpin is found that lines the wall of the exit tunnel in the center of the 70S ribosome. The chain is Large ribosomal subunit protein uL22 from Methylacidiphilum infernorum (isolate V4) (Methylokorus infernorum (strain V4)).